The primary structure comprises 64 residues: uncharacterized protein (64 aa).

This is an uncharacterized protein from Sulfolobus islandicus rod-shaped virus 1 (SIRV-1).